A 122-amino-acid chain; its full sequence is Large ribosomal subunit protein uL14 (122 aa).

This sequence belongs to the universal ribosomal protein uL14 family. In terms of assembly, part of the 50S ribosomal subunit. Forms a cluster with proteins L3 and L19. In the 70S ribosome, L14 and L19 interact and together make contacts with the 16S rRNA in bridges B5 and B8.

Its function is as follows. Binds to 23S rRNA. Forms part of two intersubunit bridges in the 70S ribosome. In Helicobacter hepaticus (strain ATCC 51449 / 3B1), this protein is Large ribosomal subunit protein uL14.